The following is a 244-amino-acid chain: AA9 family lytic polysaccharide monooxygenase B (244 aa).

An N-terminal signal peptide occupies residues 1 to 19 (MFLVPLLAALSLSAPKVAA). H20 provides a ligand contact to Cu(2+). Y39 is a (1,4-beta-D-glucosyl)n binding site. Disulfide bonds link C68/C189 and C111/C115. Residue H99 participates in Cu(2+) binding. N152 carries N-linked (GlcNAc...) asparagine glycosylation. O2 is bound by residues H178 and Q184. Y186 contributes to the Cu(2+) binding site. D224, Y226, and E229 together coordinate (1,4-beta-D-glucosyl)n. N-linked (GlcNAc...) asparagine glycosylation is present at N233.

This sequence belongs to the polysaccharide monooxygenase AA9 family. The cofactor is Cu(2+).

It is found in the secreted. The catalysed reaction is [(1-&gt;4)-beta-D-glucosyl]n+m + reduced acceptor + O2 = 4-dehydro-beta-D-glucosyl-[(1-&gt;4)-beta-D-glucosyl]n-1 + [(1-&gt;4)-beta-D-glucosyl]m + acceptor + H2O.. Lytic polysaccharide monooxygenase (LPMO) that depolymerizes crystalline and amorphous polysaccharides via the oxidation of scissile alpha- or beta-(1-4)-glycosidic bonds, yielding specifically C1 oxidation product. Catalysis by LPMOs requires the reduction of the active-site copper from Cu(II) to Cu(I) by a reducing agent and H(2)O(2) or O(2) as a cosubstrate. Displays catalytic activity on insoluble cellulose using I-beta microfibril model substrate. The protein is AA9 family lytic polysaccharide monooxygenase B of Heterobasidion irregulare (strain TC 32-1).